A 142-amino-acid polypeptide reads, in one-letter code: Large ribosomal subunit protein uL22c (142 aa).

It belongs to the universal ribosomal protein uL22 family. In terms of assembly, part of the 50S ribosomal subunit.

Its subcellular location is the plastid. The protein localises to the chloroplast. Functionally, this protein binds specifically to 23S rRNA. Its function is as follows. The globular domain of the protein is located near the polypeptide exit tunnel on the outside of the subunit, while an extended beta-hairpin is found that lines the wall of the exit tunnel in the center of the 70S ribosome. The protein is Large ribosomal subunit protein uL22c (rpl22) of Pinus koraiensis (Korean pine).